A 215-amino-acid chain; its full sequence is LysM and putative peptidoglycan-binding domain-containing protein 2 (215 aa).

The segment at 1–40 is disordered; sequence MADSSPALSLREGGPRAPRPSAPSPPPRSRSGSESEEAEL. The residue at position 2 (A2) is an N-acetylalanine. S5, S24, S33, and S57 each carry phosphoserine. Residues 17–28 show a composition bias toward pro residues; that stretch reads APRPSAPSPPPR. Residues 71 to 115 enclose the LysM domain; that stretch reads VEHRVRAGDTLQGIALKYGVTMEQIKRANKLFTNDCIFLKKTLNI. Disordered regions lie at residues 132 to 175 and 193 to 215; these read DSPE…EEVS and AAKK…LYHS. A compositionally biased stretch (basic and acidic residues) spans 196-205; that stretch reads KLKEESRDEE.

In Homo sapiens (Human), this protein is LysM and putative peptidoglycan-binding domain-containing protein 2 (LYSMD2).